A 795-amino-acid polypeptide reads, in one-letter code: Phenylalanine--tRNA ligase beta subunit (795 aa).

A tRNA-binding domain is found at 39–148 (KSEFHGVVVG…KETLVGINVY (110 aa)). The 76-residue stretch at 400-475 (HKNNTIRLHH…RIYEYNNVHL (76 aa)) folds into the B5 domain. Positions 453, 459, and 463 each coordinate Mg(2+). Residues 701 to 794 (SKFPTVRRDI…LQKKFQAVLR (94 aa)) enclose the FDX-ACB domain.

Belongs to the phenylalanyl-tRNA synthetase beta subunit family. Type 1 subfamily. As to quaternary structure, tetramer of two alpha and two beta subunits. Requires Mg(2+) as cofactor.

The protein resides in the cytoplasm. It carries out the reaction tRNA(Phe) + L-phenylalanine + ATP = L-phenylalanyl-tRNA(Phe) + AMP + diphosphate + H(+). This chain is Phenylalanine--tRNA ligase beta subunit (pheT), found in Buchnera aphidicola subsp. Acyrthosiphon pisum (strain APS) (Acyrthosiphon pisum symbiotic bacterium).